The following is a 259-amino-acid chain: Phosphatidylserine decarboxylase proenzyme (259 aa).

Catalysis depends on charge relay system; for autoendoproteolytic cleavage activity residues Asp-86, His-142, and Ser-226. Ser-226 acts as the Schiff-base intermediate with substrate; via pyruvic acid; for decarboxylase activity in catalysis. The residue at position 226 (Ser-226) is a Pyruvic acid (Ser); by autocatalysis.

It belongs to the phosphatidylserine decarboxylase family. PSD-B subfamily. Prokaryotic type I sub-subfamily. As to quaternary structure, heterodimer of a large membrane-associated beta subunit and a small pyruvoyl-containing alpha subunit. Pyruvate serves as cofactor. Post-translationally, is synthesized initially as an inactive proenzyme. Formation of the active enzyme involves a self-maturation process in which the active site pyruvoyl group is generated from an internal serine residue via an autocatalytic post-translational modification. Two non-identical subunits are generated from the proenzyme in this reaction, and the pyruvate is formed at the N-terminus of the alpha chain, which is derived from the carboxyl end of the proenzyme. The autoendoproteolytic cleavage occurs by a canonical serine protease mechanism, in which the side chain hydroxyl group of the serine supplies its oxygen atom to form the C-terminus of the beta chain, while the remainder of the serine residue undergoes an oxidative deamination to produce ammonia and the pyruvoyl prosthetic group on the alpha chain. During this reaction, the Ser that is part of the protease active site of the proenzyme becomes the pyruvoyl prosthetic group, which constitutes an essential element of the active site of the mature decarboxylase.

The protein localises to the cell membrane. The enzyme catalyses a 1,2-diacyl-sn-glycero-3-phospho-L-serine + H(+) = a 1,2-diacyl-sn-glycero-3-phosphoethanolamine + CO2. Its pathway is phospholipid metabolism; phosphatidylethanolamine biosynthesis; phosphatidylethanolamine from CDP-diacylglycerol: step 2/2. Catalyzes the formation of phosphatidylethanolamine (PtdEtn) from phosphatidylserine (PtdSer). This Halalkalibacterium halodurans (strain ATCC BAA-125 / DSM 18197 / FERM 7344 / JCM 9153 / C-125) (Bacillus halodurans) protein is Phosphatidylserine decarboxylase proenzyme.